Here is an 88-residue protein sequence, read N- to C-terminus: Small integral membrane protein 13 (88 aa).

Residues 10 to 30 (LVFVATLLIVLLLMVCGWYFV) form a helical membrane-spanning segment. Over residues 48–60 (TGSQEGDNEQPSG) the composition is skewed to polar residues. The disordered stretch occupies residues 48–88 (TGSQEGDNEQPSGSEAEEDPSASPHKMRSARQRRPPVDDGH). Serine 59, serine 61, and serine 70 each carry phosphoserine. Positions 72 to 81 (HKMRSARQRR) are enriched in basic residues.

It belongs to the SMIM13 family.

It localises to the membrane. This Rattus norvegicus (Rat) protein is Small integral membrane protein 13 (Smim13).